The sequence spans 407 residues: Formate-dependent phosphoribosylglycinamide formyltransferase (407 aa).

N(1)-(5-phospho-beta-D-ribosyl)glycinamide-binding positions include 28-29 (EL) and Glu-88. ATP-binding positions include Arg-121, Lys-162, 167-172 (SSGKGQ), 202-205 (EGFI), and Glu-210. The ATP-grasp domain occupies 126-320 (RLAAEELGVA…EFELHAKAIL (195 aa)). 2 residues coordinate Mg(2+): Glu-279 and Glu-291. N(1)-(5-phospho-beta-D-ribosyl)glycinamide is bound by residues Asp-298, Lys-367, and 374–375 (RR).

Belongs to the PurK/PurT family. In terms of assembly, homodimer.

It catalyses the reaction N(1)-(5-phospho-beta-D-ribosyl)glycinamide + formate + ATP = N(2)-formyl-N(1)-(5-phospho-beta-D-ribosyl)glycinamide + ADP + phosphate + H(+). Its pathway is purine metabolism; IMP biosynthesis via de novo pathway; N(2)-formyl-N(1)-(5-phospho-D-ribosyl)glycinamide from N(1)-(5-phospho-D-ribosyl)glycinamide (formate route): step 1/1. Functionally, involved in the de novo purine biosynthesis. Catalyzes the transfer of formate to 5-phospho-ribosyl-glycinamide (GAR), producing 5-phospho-ribosyl-N-formylglycinamide (FGAR). Formate is provided by PurU via hydrolysis of 10-formyl-tetrahydrofolate. The chain is Formate-dependent phosphoribosylglycinamide formyltransferase from Herminiimonas arsenicoxydans.